A 408-amino-acid polypeptide reads, in one-letter code: Guanine nucleotide-binding protein alpha-14 subunit (408 aa).

GTP is bound by residues 39–46 (HSEELEAK), 79–86 (GGPLSGKS), 201–205 (TRIAD), 216–222 (VHSRKAT), 241–245 (DVGGQ), 285–288 (FPKF), 325–328 (NKVD), and A380. In terms of domain architecture, G-alpha spans 71–408 (SHIKILILGG…KANAKATGLS (338 aa)). The tract at residues 74-87 (KILILGGPLSGKST) is G1 motif. S86 contributes to the Mg(2+) binding site. Positions 214–222 (DIVHSRKAT) are G2 motif. Residue T222 participates in Mg(2+) binding. Residues 237–246 (LLMIDVGGQR) are G3 motif. The segment at 321–328 (LLFFNKVD) is G4 motif. The interval 378-383 (TTATNT) is G5 motif.

It belongs to the G-alpha family. As to quaternary structure, g proteins are composed of 3 units; alpha, beta and gamma. The alpha chain contains the guanine nucleotide binding site. Interacts with the dopamine receptor dop-2 (via C-terminus); the interaction is direct.

Its function is as follows. Guanine nucleotide-binding proteins (G proteins) are involved as modulators or transducers in various transmembrane signaling systems. In association with the G-protein coupled dopamine receptor dop-2, modulates two types of learning: touch habituation and chemosensory associative conditioning. This is Guanine nucleotide-binding protein alpha-14 subunit from Caenorhabditis elegans.